Reading from the N-terminus, the 376-residue chain is Chaperone protein DnaJ (376 aa).

The 66-residue stretch at 5–70 (DYYEVLGVAK…QKRAAYDQYG (66 aa)) folds into the J domain. The CR-type zinc-finger motif lies at 136-214 (GYDTQIRVPS…CHGSGKVKET (79 aa)). Residues cysteine 149, cysteine 152, cysteine 166, cysteine 169, cysteine 188, cysteine 191, cysteine 202, and cysteine 205 each coordinate Zn(2+). CXXCXGXG motif repeat units follow at residues 149–156 (CEVCHGSG), 166–173 (CPTCHGQG), 188–195 (CPKCHGTG), and 202–209 (CAHCHGSG).

It belongs to the DnaJ family. In terms of assembly, homodimer. Requires Zn(2+) as cofactor.

It is found in the cytoplasm. In terms of biological role, participates actively in the response to hyperosmotic and heat shock by preventing the aggregation of stress-denatured proteins and by disaggregating proteins, also in an autonomous, DnaK-independent fashion. Unfolded proteins bind initially to DnaJ; upon interaction with the DnaJ-bound protein, DnaK hydrolyzes its bound ATP, resulting in the formation of a stable complex. GrpE releases ADP from DnaK; ATP binding to DnaK triggers the release of the substrate protein, thus completing the reaction cycle. Several rounds of ATP-dependent interactions between DnaJ, DnaK and GrpE are required for fully efficient folding. Also involved, together with DnaK and GrpE, in the DNA replication of plasmids through activation of initiation proteins. In Burkholderia multivorans (strain ATCC 17616 / 249), this protein is Chaperone protein DnaJ.